A 187-amino-acid polypeptide reads, in one-letter code: MRFFNIFSSSFTSTAKWSCPNKLKISSEDIRNFKDTLIAMKGRRMNATAMRLLTNETNYKVTIEVSTKAIRALKKVIRRGVGQYQPGSKTDQLITSFKEVKQEYDEMILKMDIKMVPSKADYVIECWLKKDAAEKAAKESKDRKALKNAARKAEKNAHEESSYFRVDDPEPEPQNIYRIDPIIEIYV.

A compositionally biased stretch (basic and acidic residues) spans 139-168 (ESKDRKALKNAARKAEKNAHEESSYFRVDD). The interval 139–172 (ESKDRKALKNAARKAEKNAHEESSYFRVDDPEPE) is disordered.

This is an uncharacterized protein from Caenorhabditis elegans.